We begin with the raw amino-acid sequence, 409 residues long: NADH-quinone oxidoreductase subunit D 1 (409 aa).

This sequence belongs to the complex I 49 kDa subunit family. In terms of assembly, NDH-1 is composed of 14 different subunits. Subunits NuoB, C, D, E, F, and G constitute the peripheral sector of the complex.

It is found in the cell inner membrane. The enzyme catalyses a quinone + NADH + 5 H(+)(in) = a quinol + NAD(+) + 4 H(+)(out). NDH-1 shuttles electrons from NADH, via FMN and iron-sulfur (Fe-S) centers, to quinones in the respiratory chain. The immediate electron acceptor for the enzyme in this species is believed to be ubiquinone. Couples the redox reaction to proton translocation (for every two electrons transferred, four hydrogen ions are translocated across the cytoplasmic membrane), and thus conserves the redox energy in a proton gradient. This is NADH-quinone oxidoreductase subunit D 1 from Solibacter usitatus (strain Ellin6076).